Here is a 389-residue protein sequence, read N- to C-terminus: GTPase Obg (389 aa).

In terms of domain architecture, Obg spans 1–159; the sequence is MKFVDEAKIL…REVLLELMLL (159 aa). Positions 160–333 constitute an OBG-type G domain; the sequence is ADVGMLGMPN…LCWDIMEFLK (174 aa). GTP contacts are provided by residues 166 to 173, 191 to 195, 213 to 216, 283 to 286, and 314 to 316; these read GMPNAGKS, FTTLV, DIPG, NKVD, and AAI. Residues serine 173 and threonine 193 each contribute to the Mg(2+) site. The tract at residues 362 to 389 is disordered; sequence QLENPDLEDDDEDWDEEDDDGVEFIYQR. Positions 364–383 are enriched in acidic residues; it reads ENPDLEDDDEDWDEEDDDGV.

It belongs to the TRAFAC class OBG-HflX-like GTPase superfamily. OBG GTPase family. As to quaternary structure, monomer. Requires Mg(2+) as cofactor.

Its subcellular location is the cytoplasm. Functionally, an essential GTPase which binds GTP, GDP and possibly (p)ppGpp with moderate affinity, with high nucleotide exchange rates and a fairly low GTP hydrolysis rate. Plays a role in control of the cell cycle, stress response, ribosome biogenesis and in those bacteria that undergo differentiation, in morphogenesis control. The chain is GTPase Obg from Proteus mirabilis (strain HI4320).